A 776-amino-acid polypeptide reads, in one-letter code: MAGFINLEDSPMFQKQVFSLEGTSDELKDRCQKLYKGVKKFMGALGEASTGVSAFADSLEEFGAGHDDPVSVSIGGPVISKFINTLRELSSYKEFLRSQVEHVLLERLTNFMTVDLQEAKESRRRFDKAVHSYDQAREKFVSLKKNTRGDIVAELEEDLENSKSAFEKSRFNLVNSLMTIEAKKKYEFLESISAIMDSHFKYFKLGYDLLSQLEPYIHQVLTYAQQSKEQSKIEQDRFAQRIQEFRTQSELDSQQASAKADPSDVGGNHVYRAIPRKNVEANSVSTADKEVTKQGYLLKRSASLRADWKRRFFVLDNHGSLYYYRNTGNKSAKSQHYYSGLGEHSSGVFGRFRTRHNRSASQGSLDCNMIDLRTSLIKLDAEDTDLRLCFRIISPQKTYTLQAENGADRMDWVNKITAAITIRLNSHFLQQSPARYLDKKNTSSGPATENLTLNQKEDYNQRLNVGDDVLTILREIPGNNTCAECNAPDPDWASLNLGVLMCIECSGVHRNLGVHISKVRSLTLDVKVWEPTILDLFRNLGNGYCNSVWEELLHHLDDDSEKGSTDTLASVSKPSSEDWFTLKEKYINGKYLEKALVVKDEREANSTASSRIWEAVQSRNIRDIYRLIVKADANIINTKFDDITDLDVYHHHHVDAPDEVKKRHDPNACQRIKNSNEARNCLQGCSLLHVACQSGDPILLELLLQFGADINMRDYHGRTPLHHCIASGNNAFAKVLLRRGARPSIEDGGGLSVLERAMEMGAITDEELFLLLAECQ.

Residues 2–226 (AGFINLEDSP…IHQVLTYAQQ (225 aa)) form the BAR domain. A disordered region spans residues 248-267 (QSELDSQQASAKADPSDVGG). The 132-residue stretch at 290–421 (EVTKQGYLLK…WVNKITAAIT (132 aa)) folds into the PH domain. An Arf-GAP domain is found at 467–604 (DDVLTILREI…ALVVKDEREA (138 aa)). The C4-type zinc finger occupies 482 to 505 (CAECNAPDPDWASLNLGVLMCIEC). ANK repeat units lie at residues 683–712 (QGCS…DINM) and 716–745 (HGRT…RPSI).

As to expression, expressed in roots, hypocotyls, cotyledons, leaf and shoot apical meristems and siliques.

In terms of biological role, probable GTPase-activating protein. The sequence is that of ADP-ribosylation factor GTPase-activating protein AGD2 (AGD2) from Arabidopsis thaliana (Mouse-ear cress).